Consider the following 344-residue polypeptide: MAALPAETRPLLAVLRGERRDPPPVWLMRQAGRYLPEYRALRETKGGFLELAYDSDAAAEITLQPIRRFGFDGAILFSDILIIPHAMGQDLRFEAGEGPRLSPTLVDRTLADLEPVPARLEPIYGTVRRVRAALPAETTFLGFAGSPWTVATYMVAGQGSREQAETRRKAYRDPAGFQAIIDALVDATADYLSKQIEAGVDAVQLFDSWAGSLAPREFERWVIAPTAQLVRRLHARHPGVPVIGFPKGAGGKLPAYARETGVDAVGLDETVDPAWAHANLPEGLTVQGNLDPLALVSGGEGLDTAVDAILGAFPGRPHVFNLGHGILLDTPIAHVERLLARVRG.

Residues 29-33, aspartate 79, tyrosine 153, serine 208, and histidine 324 each bind substrate; that span reads RQAGR.

Belongs to the uroporphyrinogen decarboxylase family. In terms of assembly, homodimer.

Its subcellular location is the cytoplasm. It carries out the reaction uroporphyrinogen III + 4 H(+) = coproporphyrinogen III + 4 CO2. It functions in the pathway porphyrin-containing compound metabolism; protoporphyrin-IX biosynthesis; coproporphyrinogen-III from 5-aminolevulinate: step 4/4. Catalyzes the decarboxylation of four acetate groups of uroporphyrinogen-III to yield coproporphyrinogen-III. The chain is Uroporphyrinogen decarboxylase from Rhizorhabdus wittichii (strain DSM 6014 / CCUG 31198 / JCM 15750 / NBRC 105917 / EY 4224 / RW1) (Sphingomonas wittichii).